A 326-amino-acid polypeptide reads, in one-letter code: 4-hydroxythreonine-4-phosphate dehydrogenase (326 aa).

The substrate site is built by His-134 and Thr-135. A divalent metal cation-binding residues include His-164, His-209, and His-264. Substrate-binding residues include Lys-272, Asn-281, and Arg-290.

This sequence belongs to the PdxA family. As to quaternary structure, homodimer. Zn(2+) is required as a cofactor. Requires Mg(2+) as cofactor. The cofactor is Co(2+).

It localises to the cytoplasm. It catalyses the reaction 4-(phosphooxy)-L-threonine + NAD(+) = 3-amino-2-oxopropyl phosphate + CO2 + NADH. It functions in the pathway cofactor biosynthesis; pyridoxine 5'-phosphate biosynthesis; pyridoxine 5'-phosphate from D-erythrose 4-phosphate: step 4/5. In terms of biological role, catalyzes the NAD(P)-dependent oxidation of 4-(phosphooxy)-L-threonine (HTP) into 2-amino-3-oxo-4-(phosphooxy)butyric acid which spontaneously decarboxylates to form 3-amino-2-oxopropyl phosphate (AHAP). The protein is 4-hydroxythreonine-4-phosphate dehydrogenase of Colwellia psychrerythraea (strain 34H / ATCC BAA-681) (Vibrio psychroerythus).